Consider the following 291-residue polypeptide: ATP phosphoribosyltransferase 1 (291 aa).

The protein belongs to the ATP phosphoribosyltransferase family. Long subfamily. It depends on Mg(2+) as a cofactor.

It localises to the cytoplasm. It catalyses the reaction 1-(5-phospho-beta-D-ribosyl)-ATP + diphosphate = 5-phospho-alpha-D-ribose 1-diphosphate + ATP. It participates in amino-acid biosynthesis; L-histidine biosynthesis; L-histidine from 5-phospho-alpha-D-ribose 1-diphosphate: step 1/9. With respect to regulation, feedback inhibited by histidine. Its function is as follows. Catalyzes the condensation of ATP and 5-phosphoribose 1-diphosphate to form N'-(5'-phosphoribosyl)-ATP (PR-ATP). Has a crucial role in the pathway because the rate of histidine biosynthesis seems to be controlled primarily by regulation of HisG enzymatic activity. This is ATP phosphoribosyltransferase 1 from Geobacter sulfurreducens (strain ATCC 51573 / DSM 12127 / PCA).